A 744-amino-acid chain; its full sequence is Cell surface receptor daf-4 (744 aa).

The signal sequence occupies residues 1 to 31 (MNQKGTVRLKALVLICLPLFLIATPVPVAVT). The Extracellular portion of the chain corresponds to 48–253 (WANTLVSKVA…IALLILAYVG (206 aa)). N-linked (GlcNAc...) asparagine glycans are attached at residues Asn-60, Asn-134, and Asn-165. The chain crosses the membrane as a helical span at residues 254-274 (WKFQQNKKEEIKKQQKIKFDM). Residues 275 to 744 (EKTDALEAGN…PSGTFGTFTT (470 aa)) lie on the Cytoplasmic side of the membrane. The Protein kinase domain maps to 306–603 (ITDFQLISKG…FARVWNHIMS (298 aa)). Residues 312–320 (ISKGRFGKV) and Lys-338 each bind ATP. Catalysis depends on Asp-440, which acts as the Proton acceptor. Disordered regions lie at residues 605–686 (PDSS…PEPE) and 724–744 (AGAD…TFTT). Residues 620-639 (RGVDDVEQSEKPEGIEEMQH) show a composition bias toward basic and acidic residues. Residues 731 to 744 (STPTPSGTFGTFTT) show a composition bias toward low complexity.

It belongs to the protein kinase superfamily. TKL Ser/Thr protein kinase family. TGFB receptor subfamily. As to quaternary structure, may interact with daf-1 to regulate dauer larva development. Interacts with sma-10. Pharynx, intestine, hypodermis and body wall muscles in L1 through to adult stages. Also expressed in head neurons, ventral cord and tail neurons. Subset of head neurons show coexpression with daf-1 when dauer/nondauer decision is made.

The protein localises to the cell membrane. The catalysed reaction is L-threonyl-[receptor-protein] + ATP = O-phospho-L-threonyl-[receptor-protein] + ADP + H(+). It carries out the reaction L-seryl-[receptor-protein] + ATP = O-phospho-L-seryl-[receptor-protein] + ADP + H(+). In terms of biological role, involved in a TGF-beta pathway. May be a receptor for TGF-beta-like ligand daf-7. Controls the decision of whether or not larvae enter a developmentally arrested state, known as dauer, in response to environmental conditions. Regulates body size and male tail patterning. Involved in regulating entry into quiescence triggered by satiety. Involved in sensitivity to CO2 levels. This Caenorhabditis elegans protein is Cell surface receptor daf-4.